The sequence spans 445 residues: Xylose isomerase (445 aa).

Active-site residues include His-107 and Asp-110. Positions 238, 274, 277, 302, 313, 315, and 345 each coordinate Mg(2+).

This sequence belongs to the xylose isomerase family. Homotetramer. It depends on Mg(2+) as a cofactor.

It localises to the cytoplasm. It catalyses the reaction alpha-D-xylose = alpha-D-xylulofuranose. The protein is Xylose isomerase of Bacillus cereus (strain ATCC 10987 / NRS 248).